The primary structure comprises 250 residues: 5-oxoprolinase subunit A (250 aa).

Belongs to the LamB/PxpA family. In terms of assembly, forms a complex composed of PxpA, PxpB and PxpC.

It catalyses the reaction 5-oxo-L-proline + ATP + 2 H2O = L-glutamate + ADP + phosphate + H(+). Its function is as follows. Catalyzes the cleavage of 5-oxoproline to form L-glutamate coupled to the hydrolysis of ATP to ADP and inorganic phosphate. This Staphylococcus aureus (strain NCTC 8325 / PS 47) protein is 5-oxoprolinase subunit A.